The sequence spans 115 residues: General stress protein 17M (115 aa).

In Bacillus subtilis (strain 168), this protein is General stress protein 17M (yflT).